The following is a 117-amino-acid chain: Large ribosomal subunit protein bL20 (117 aa).

It belongs to the bacterial ribosomal protein bL20 family.

Its function is as follows. Binds directly to 23S ribosomal RNA and is necessary for the in vitro assembly process of the 50S ribosomal subunit. It is not involved in the protein synthesizing functions of that subunit. The polypeptide is Large ribosomal subunit protein bL20 (Mycoplasma mobile (strain ATCC 43663 / 163K / NCTC 11711) (Mesomycoplasma mobile)).